Consider the following 74-residue polypeptide: Exodeoxyribonuclease 7 small subunit (74 aa).

This sequence belongs to the XseB family. Heterooligomer composed of large and small subunits.

It is found in the cytoplasm. It catalyses the reaction Exonucleolytic cleavage in either 5'- to 3'- or 3'- to 5'-direction to yield nucleoside 5'-phosphates.. Bidirectionally degrades single-stranded DNA into large acid-insoluble oligonucleotides, which are then degraded further into small acid-soluble oligonucleotides. The polypeptide is Exodeoxyribonuclease 7 small subunit (Thermotoga neapolitana (strain ATCC 49049 / DSM 4359 / NBRC 107923 / NS-E)).